The sequence spans 313 residues: Probable cell division protein WhiA (313 aa).

The segment at residues 278-311 (SLKELGKLLDPPLSKSGVNHRLRRIKSIANEIRG) is a DNA-binding region (H-T-H motif).

Belongs to the WhiA family.

In terms of biological role, involved in cell division and chromosome segregation. The polypeptide is Probable cell division protein WhiA (Halothermothrix orenii (strain H 168 / OCM 544 / DSM 9562)).